Reading from the N-terminus, the 277-residue chain is Probable CCR4-associated factor 1 homolog 10 (277 aa).

Positions 40, 42, 166, and 235 each coordinate a divalent metal cation.

This sequence belongs to the CAF1 family. Component of the CCR4-NOT complex, at least composed of CRR4 and CAF1 proteins. The cofactor is a divalent metal cation.

It localises to the nucleus. Its subcellular location is the cytoplasm. The catalysed reaction is Exonucleolytic cleavage of poly(A) to 5'-AMP.. In terms of biological role, ubiquitous transcription factor required for a diverse set of processes. It is a component of the CCR4 complex involved in the control of gene expression. This Arabidopsis thaliana (Mouse-ear cress) protein is Probable CCR4-associated factor 1 homolog 10 (CAF1-10).